The primary structure comprises 231 residues: Antiholin-like protein LrgB (231 aa).

The next 5 membrane-spanning stretches (helical) occupy residues 7-24 (PYFG…GTFL), 34-56 (FTPL…FSYA), 91-113 (WWQI…YLLA), 149-171 (ITAF…FLKV), and 207-229 (ASIA…VQLI).

The protein belongs to the CidB/LrgB family. LrgB subfamily.

The protein localises to the cell membrane. Functionally, inhibits the expression or activity of extracellular murein hydrolases by interacting, possibly with LrgA, with the holin-like protein CidA. The LrgAB and CidA proteins may affect the proton motive force of the membrane. May be involved in programmed cell death (PCD), possibly triggering PCD in response to antibiotics and environmental stresses. The sequence is that of Antiholin-like protein LrgB from Bacillus subtilis (strain 168).